The chain runs to 82 residues: MRTLLLTLVVVTIVCLDLGNSLICYVSEYGAKMTCPEGKTLCEKYAVPLMQGHFYFAWRCTSTCKAGAYNICCSTDLCNKIP.

The N-terminal stretch at 1-21 (MRTLLLTLVVVTIVCLDLGNS) is a signal peptide. 4 cysteine pairs are disulfide-bonded: Cys-24/Cys-42, Cys-35/Cys-60, Cys-64/Cys-72, and Cys-73/Cys-78.

This sequence belongs to the three-finger toxin family. Short-chain subfamily. In terms of tissue distribution, expressed by the venom gland.

It is found in the secreted. In Micrurus altirostris (Uruguayan coral snake), this protein is Three-finger toxin MALT0063C.